We begin with the raw amino-acid sequence, 337 residues long: Probable deoxyhypusine synthase (337 aa).

Lys308 functions as the Nucleophile in the catalytic mechanism.

This sequence belongs to the deoxyhypusine synthase family. NAD(+) is required as a cofactor.

It carries out the reaction [eIF5A protein]-L-lysine + spermidine = [eIF5A protein]-deoxyhypusine + propane-1,3-diamine. It functions in the pathway protein modification; eIF5A hypusination. Its function is as follows. Catalyzes the NAD-dependent oxidative cleavage of spermidine and the subsequent transfer of the butylamine moiety of spermidine to the epsilon-amino group of a specific lysine residue of the eIF-5A precursor protein to form the intermediate deoxyhypusine residue. In Thermococcus kodakarensis (strain ATCC BAA-918 / JCM 12380 / KOD1) (Pyrococcus kodakaraensis (strain KOD1)), this protein is Probable deoxyhypusine synthase.